Reading from the N-terminus, the 149-residue chain is SsrA-binding protein (149 aa).

It belongs to the SmpB family.

It localises to the cytoplasm. In terms of biological role, required for rescue of stalled ribosomes mediated by trans-translation. Binds to transfer-messenger RNA (tmRNA), required for stable association of tmRNA with ribosomes. tmRNA and SmpB together mimic tRNA shape, replacing the anticodon stem-loop with SmpB. tmRNA is encoded by the ssrA gene; the 2 termini fold to resemble tRNA(Ala) and it encodes a 'tag peptide', a short internal open reading frame. During trans-translation Ala-aminoacylated tmRNA acts like a tRNA, entering the A-site of stalled ribosomes, displacing the stalled mRNA. The ribosome then switches to translate the ORF on the tmRNA; the nascent peptide is terminated with the 'tag peptide' encoded by the tmRNA and targeted for degradation. The ribosome is freed to recommence translation, which seems to be the essential function of trans-translation. The sequence is that of SsrA-binding protein from Mesoplasma florum (strain ATCC 33453 / NBRC 100688 / NCTC 11704 / L1) (Acholeplasma florum).